Here is a 184-residue protein sequence, read N- to C-terminus: Ras protein let-60 (184 aa).

GTP is bound at residue 10–17; that stretch reads GDGGVGKS. Residues 32–40 carry the Effector region motif; it reads YDPTIEDSY. Residues 57–61 and 116–119 contribute to the GTP site; these read DTAGQ and NKCD. Cys-181 carries the cysteine methyl ester modification. Cys-181 carries the S-farnesyl cysteine lipid modification. The propeptide at 182–184 is removed in mature form; sequence QIM.

It belongs to the small GTPase superfamily. Ras family. In terms of assembly, interacts with soc-2. Interacts (in GTP-bound form) with plc-1 (via Ras-associating domain 1). In terms of tissue distribution, expressed in body wall muscles and in the nervous system including ganglion, nerve ring dorsal and ventral nerve cords, motor neurons and sensory tail neurons.

The protein localises to the cell membrane. It catalyses the reaction GTP + H2O = GDP + phosphate + H(+). Functionally, GTP-binding protein with GTPase activity. The level of let-60 controls the switch between vulval and hypodermal cell fates during C.elegans vulval induction. May stimulate the guanine nucleotide exchange factor (GEF) activity of rap-1. May induce nuclear condensation. The chain is Ras protein let-60 from Caenorhabditis elegans.